A 201-amino-acid chain; its full sequence is Probable cobalt-precorrin-6B C(15)-methyltransferase (decarboxylating) (201 aa).

Residues threonine 28, 52–56 (GTGTG), aspartate 76, and alanine 105 each bind S-adenosyl-L-methionine.

This sequence belongs to the methyltransferase superfamily. Archaeal-type CbiT family.

It catalyses the reaction Co-precorrin-6B + S-adenosyl-L-methionine = Co-precorrin-7 + S-adenosyl-L-homocysteine + CO2. It functions in the pathway cofactor biosynthesis; adenosylcobalamin biosynthesis; cob(II)yrinate a,c-diamide from sirohydrochlorin (anaerobic route): step 8/10. Catalyzes the methylation of C-15 in cobalt-precorrin-6B followed by the decarboxylation of C-12 to form cobalt-precorrin-7. The polypeptide is Probable cobalt-precorrin-6B C(15)-methyltransferase (decarboxylating) (Thermoplasma volcanium (strain ATCC 51530 / DSM 4299 / JCM 9571 / NBRC 15438 / GSS1)).